The primary structure comprises 358 residues: GTPase Obg (358 aa).

An Obg domain is found at 1-159; that stretch reads MKFLDEAKVY…RWIWLRLKLI (159 aa). In terms of domain architecture, OBG-type G spans 160-327; that stretch reads ADAGLVGLPN…VLRALVEVIG (168 aa). Residues 166–173, 191–195, 212–215, 279–282, and 308–310 contribute to the GTP site; these read GLPNAGKS, FTTLH, DIPG, NKID, and SGV. Positions 173 and 193 each coordinate Mg(2+). Positions 335-358 are disordered; it reads AKGADASAAQAMETPVARAKPWSP.

This sequence belongs to the TRAFAC class OBG-HflX-like GTPase superfamily. OBG GTPase family. As to quaternary structure, monomer. Mg(2+) is required as a cofactor.

The protein resides in the cytoplasm. Its function is as follows. An essential GTPase which binds GTP, GDP and possibly (p)ppGpp with moderate affinity, with high nucleotide exchange rates and a fairly low GTP hydrolysis rate. Plays a role in control of the cell cycle, stress response, ribosome biogenesis and in those bacteria that undergo differentiation, in morphogenesis control. The chain is GTPase Obg from Nitrobacter winogradskyi (strain ATCC 25391 / DSM 10237 / CIP 104748 / NCIMB 11846 / Nb-255).